We begin with the raw amino-acid sequence, 105 residues long: MVEFCPKCNNIMLPKNGRLKCTVCGFEEELGNRTEEYELKEKIEAKKQEVTVIEDVDTLPTTRIECPSCGNMEASWWLQQTRCADEPETRFYKCKKCGHTWREYD.

Positions 5, 8, 21, 24, 66, 69, 94, and 97 each coordinate Zn(2+). Residues 5-24 (CPKCNNIMLPKNGRLKCTVC) form a C4-type zinc finger. The segment at 62–102 (TRIECPSCGNMEASWWLQQTRCADEPETRFYKCKKCGHTWR) adopts a TFIIS-type zinc-finger fold.

It belongs to the archaeal RpoM/eukaryotic RPA12/RPB9/RPC11 RNA polymerase family.

Its function is as follows. Induces RNA cleavage activity in the RNA polymerase. In its presence, the cleavage activity of the RNA polymerase truncates the RNA back to position +15 in a stepwise manner by releasing mainly dinucleotides from the 3'-end of the nascent RNA. The truncated RNAs are able to continue elongation. Involved in transcriptional proofreading and fidelity. Misincorporation of nucleotides during elongation of transcription leads to arrested elongation complexes which are rescued by TFS-promoted removal of a dinucleotide from the 3'-end. TFS is able to induce a cleavage resynthesis cycle in stalled elongation complexes (resulting from the next missing nucleotide or a reduced incorporation rate of a wrong nucleotide) preventing misincorporation and enabling proofreading in a post-incorporation manner. Pausing of elongation complexes is the main determinant of TFS-induced RNA cleavage. This chain is Transcription factor S, found in Methanothermococcus thermolithotrophicus (Methanococcus thermolithotrophicus).